The following is a 283-amino-acid chain: Quinate/shikimate dehydrogenase (NAD(+)) (283 aa).

The shikimate site is built by Ser17, Thr69, Lys73, Asn94, and Asp110. Residues 17-19 (SRT), Thr69, Lys73, Asn94, and Asp110 contribute to the L-quinate site. Lys73 serves as the catalytic Proton acceptor. NAD(+) is bound by residues 137–138 (GV), Asp158, Arg163, 203–206 (PMGM), Ala213, Val228, and Gly251. Gln258 is a shikimate binding site. Gln258 contributes to the L-quinate binding site.

The protein belongs to the shikimate dehydrogenase family. As to quaternary structure, homodimer.

The enzyme catalyses L-quinate + NAD(+) = 3-dehydroquinate + NADH + H(+). The catalysed reaction is shikimate + NAD(+) = 3-dehydroshikimate + NADH + H(+). It functions in the pathway metabolic intermediate biosynthesis; chorismate biosynthesis; chorismate from D-erythrose 4-phosphate and phosphoenolpyruvate: step 4/7. It participates in aromatic compound metabolism; 3,4-dihydroxybenzoate biosynthesis; 3-dehydroquinate from D-quinate (NAD(+) route). Involved in the biosynthesis of the chorismate, which leads to the biosynthesis of aromatic amino acids, and plays a key role in the quinate degradation pathway. Catalyzes the NAD(+)-dependent oxidation of both quinate and shikimate to 3-dehydroquinate and 3-dehydroshikimate, respectively. The polypeptide is Quinate/shikimate dehydrogenase (NAD(+)) (Corynebacterium glutamicum (strain R)).